The chain runs to 446 residues: Bifunctional protein GlmU (446 aa).

Residues 1-226 are pyrophosphorylase; that stretch reads MLAVAILAAG…PDEVNGINDR (226 aa). UDP-N-acetyl-alpha-D-glucosamine is bound by residues 7–10, K21, Q73, and 78–79; these read LAAG and GT. D103 serves as a coordination point for Mg(2+). The UDP-N-acetyl-alpha-D-glucosamine site is built by G140, E155, N170, and N224. N224 is a Mg(2+) binding site. The tract at residues 227-247 is linker; sequence CQLANCEALLQERLRNYWMKE. Residues 248 to 446 form an N-acetyltransferase region; it reads GVTFTDPASC…SKQLIKNGWQ (199 aa). 2 residues coordinate UDP-N-acetyl-alpha-D-glucosamine: R329 and K347. H359 (proton acceptor) is an active-site residue. Residues Y362 and N373 each contribute to the UDP-N-acetyl-alpha-D-glucosamine site. Acetyl-CoA is bound by residues A376, 382-383, A419, and R436; that span reads NY.

In the N-terminal section; belongs to the N-acetylglucosamine-1-phosphate uridyltransferase family. It in the C-terminal section; belongs to the transferase hexapeptide repeat family. As to quaternary structure, homotrimer. Requires Mg(2+) as cofactor.

Its subcellular location is the cytoplasm. The enzyme catalyses alpha-D-glucosamine 1-phosphate + acetyl-CoA = N-acetyl-alpha-D-glucosamine 1-phosphate + CoA + H(+). It carries out the reaction N-acetyl-alpha-D-glucosamine 1-phosphate + UTP + H(+) = UDP-N-acetyl-alpha-D-glucosamine + diphosphate. It participates in nucleotide-sugar biosynthesis; UDP-N-acetyl-alpha-D-glucosamine biosynthesis; N-acetyl-alpha-D-glucosamine 1-phosphate from alpha-D-glucosamine 6-phosphate (route II): step 2/2. It functions in the pathway nucleotide-sugar biosynthesis; UDP-N-acetyl-alpha-D-glucosamine biosynthesis; UDP-N-acetyl-alpha-D-glucosamine from N-acetyl-alpha-D-glucosamine 1-phosphate: step 1/1. The protein operates within bacterial outer membrane biogenesis; LPS lipid A biosynthesis. Functionally, catalyzes the last two sequential reactions in the de novo biosynthetic pathway for UDP-N-acetylglucosamine (UDP-GlcNAc). The C-terminal domain catalyzes the transfer of acetyl group from acetyl coenzyme A to glucosamine-1-phosphate (GlcN-1-P) to produce N-acetylglucosamine-1-phosphate (GlcNAc-1-P), which is converted into UDP-GlcNAc by the transfer of uridine 5-monophosphate (from uridine 5-triphosphate), a reaction catalyzed by the N-terminal domain. This chain is Bifunctional protein GlmU, found in Prochlorococcus marinus (strain MIT 9313).